The primary structure comprises 92 residues: Small ribosomal subunit protein bS20 (92 aa).

Belongs to the bacterial ribosomal protein bS20 family.

In terms of biological role, binds directly to 16S ribosomal RNA. In Methylacidiphilum infernorum (isolate V4) (Methylokorus infernorum (strain V4)), this protein is Small ribosomal subunit protein bS20.